We begin with the raw amino-acid sequence, 263 residues long: Rano class II histocompatibility antigen, B-1 beta chain (263 aa).

The first 27 residues, 1 to 27 (MALQTPSFLLPAAVVVLMVLSSPGTEG), serve as a signal peptide directing secretion. The interval 28-120 (RDSPRDFVYQ…SEVRTSLRRL (93 aa)) is beta-1. At 28-224 (RDSPRDFVYQ…RAQSESAQSK (197 aa)) the chain is on the extracellular side. 2 cysteine pairs are disulfide-bonded: C42-C104 and C143-C199. N-linked (GlcNAc...) asparagine glycosylation occurs at N46. Residues 121–214 (EQPNVAISLS…SLESPVTVEW (94 aa)) are beta-2. Positions 123 to 211 (PNVAISLSRT…DHPSLESPVT (89 aa)) constitute an Ig-like C1-type domain. The interval 215-224 (RAQSESAQSK) is connecting peptide. Residues 225–245 (MLSGIGGFVLGVIFLGLGLFI) traverse the membrane as a helical segment. Residues 246 to 263 (RHKRQKGPRGPPPAGLLQ) lie on the Cytoplasmic side of the membrane. A Glycyl lysine isopeptide (Lys-Gly) (interchain with G-Cter in ubiquitin) cross-link involves residue K251.

It belongs to the MHC class II family.

It is found in the membrane. In terms of biological role, involved in the presentation of foreign antigens to the immune system. This Rattus norvegicus (Rat) protein is Rano class II histocompatibility antigen, B-1 beta chain (RT1-Bb).